We begin with the raw amino-acid sequence, 451 residues long: Tubulin alpha-1 chain (451 aa).

Glutamine 11 serves as a coordination point for GTP. An N6-acetyllysine modification is found at lysine 40. Glutamate 71, glycine 144, threonine 145, threonine 179, asparagine 206, and asparagine 228 together coordinate GTP. Residue glutamate 71 coordinates Mg(2+). Residue glutamate 254 is part of the active site.

It belongs to the tubulin family. Dimer of alpha and beta chains. A typical microtubule is a hollow water-filled tube with an outer diameter of 25 nm and an inner diameter of 15 nM. Alpha-beta heterodimers associate head-to-tail to form protofilaments running lengthwise along the microtubule wall with the beta-tubulin subunit facing the microtubule plus end conferring a structural polarity. Microtubules usually have 13 protofilaments but different protofilament numbers can be found in some organisms and specialized cells. It depends on Mg(2+) as a cofactor. Undergoes a tyrosination/detyrosination cycle, the cyclic removal and re-addition of a C-terminal tyrosine residue by the enzymes tubulin tyrosine carboxypeptidase (TTCP) and tubulin tyrosine ligase (TTL), respectively. In terms of processing, acetylation of alpha chains at Lys-40 stabilizes microtubules and affects affinity and processivity of microtubule motors. This modification has a role in multiple cellular functions, ranging from cell motility, cell cycle progression or cell differentiation to intracellular trafficking and signaling.

It is found in the cytoplasm. It localises to the cytoskeleton. The catalysed reaction is GTP + H2O = GDP + phosphate + H(+). Its function is as follows. Tubulin is the major constituent of microtubules, a cylinder consisting of laterally associated linear protofilaments composed of alpha- and beta-tubulin heterodimers. Microtubules grow by the addition of GTP-tubulin dimers to the microtubule end, where a stabilizing cap forms. Below the cap, tubulin dimers are in GDP-bound state, owing to GTPase activity of alpha-tubulin. This is Tubulin alpha-1 chain (TUBA1) from Zea mays (Maize).